Consider the following 87-residue polypeptide: Exodeoxyribonuclease 7 small subunit (87 aa).

This sequence belongs to the XseB family. In terms of assembly, heterooligomer composed of large and small subunits.

It is found in the cytoplasm. The enzyme catalyses Exonucleolytic cleavage in either 5'- to 3'- or 3'- to 5'-direction to yield nucleoside 5'-phosphates.. In terms of biological role, bidirectionally degrades single-stranded DNA into large acid-insoluble oligonucleotides, which are then degraded further into small acid-soluble oligonucleotides. The chain is Exodeoxyribonuclease 7 small subunit from Pelotomaculum thermopropionicum (strain DSM 13744 / JCM 10971 / SI).